The sequence spans 308 residues: Solute carrier family 25 member 47 (308 aa).

3 Solcar repeats span residues 1 to 80 (MDFV…CLAH), 93 to 206 (PTKA…LCEW), and 215 to 302 (PDVP…VLRL). 6 helical membrane-spanning segments follow: residues 3-23 (FVAG…LDTV), 49-69 (VWGF…VSSV), 98-116 (ITLS…TSPT), 190-210 (GHSF…LSPA), 217-237 (VPGV…VATP), and 273-293 (VLFK…MVVF).

Belongs to the mitochondrial carrier (TC 2.A.29) family. As to expression, specifically expressed in liver.

It localises to the mitochondrion inner membrane. The protein localises to the mitochondrion outer membrane. The enzyme catalyses NAD(+)(in) = NAD(+)(out). It carries out the reaction acetyl-CoA(in) = acetyl-CoA(out). Its function is as follows. Mitochondrial NAD(+) transporter that acts as a 'metabolic gate' in hepatic lipogenesis. Provides NAD(+) substrate to mitochondrial SIRT3 deacetylase and enables its NAD(+)-dependent activities in mitochondrial energy metabolism. This triggers downstream activation of PRKAA1/AMPK-alpha signaling cascade that negatively regulates sterol regulatory element-binding protein (SREBP) transcriptional activities and ATP-consuming lipogenesis to restore cellular energy balance. May transport other mitochondrial metabolites having an aromatic nucleotide and phosphate groups, such as acetyl-CoA. Does not transport amino acids. The transport mechanism remains to be elucidated. In Homo sapiens (Human), this protein is Solute carrier family 25 member 47.